The following is a 148-amino-acid chain: Macrodomain Ter protein (148 aa).

The protein belongs to the MatP family. Homodimer.

It localises to the cytoplasm. Its function is as follows. Required for spatial organization of the terminus region of the chromosome (Ter macrodomain) during the cell cycle. Prevents early segregation of duplicated Ter macrodomains during cell division. Binds specifically to matS, which is a 13 bp signature motif repeated within the Ter macrodomain. The sequence is that of Macrodomain Ter protein from Haemophilus influenzae (strain 86-028NP).